The primary structure comprises 159 residues: Protein-export protein SecB (159 aa).

It belongs to the SecB family. As to quaternary structure, homotetramer, a dimer of dimers. One homotetramer interacts with 1 SecA dimer.

Its subcellular location is the cytoplasm. In terms of biological role, one of the proteins required for the normal export of preproteins out of the cell cytoplasm. It is a molecular chaperone that binds to a subset of precursor proteins, maintaining them in a translocation-competent state. It also specifically binds to its receptor SecA. This is Protein-export protein SecB from Aromatoleum aromaticum (strain DSM 19018 / LMG 30748 / EbN1) (Azoarcus sp. (strain EbN1)).